A 264-amino-acid chain; its full sequence is Hydroxyethylthiazole kinase (264 aa).

A substrate-binding site is contributed by M47. Residues R123 and S169 each contribute to the ATP site. G196 is a binding site for substrate.

This sequence belongs to the Thz kinase family. Requires Mg(2+) as cofactor.

The enzyme catalyses 5-(2-hydroxyethyl)-4-methylthiazole + ATP = 4-methyl-5-(2-phosphooxyethyl)-thiazole + ADP + H(+). The protein operates within cofactor biosynthesis; thiamine diphosphate biosynthesis; 4-methyl-5-(2-phosphoethyl)-thiazole from 5-(2-hydroxyethyl)-4-methylthiazole: step 1/1. Catalyzes the phosphorylation of the hydroxyl group of 4-methyl-5-beta-hydroxyethylthiazole (THZ). This Brachyspira hyodysenteriae (strain ATCC 49526 / WA1) protein is Hydroxyethylthiazole kinase.